The primary structure comprises 305 residues: Mitochondrial brown fat uncoupling protein 1 (305 aa).

At 1 to 10 the chain is on the mitochondrial intermembrane side; that stretch reads MVGHAATDVP. The chain crosses the membrane as a helical span at residues 11 to 32; the sequence is PTMAVKIFSAGVAACVADIITF. Solcar repeat units lie at residues 11–102, 109–199, and 208–293; these read PTMA…VQEF, ASLG…MKEA, and DDVP…LKRE. At 33-73 the chain is on the mitochondrial matrix side; sequence PLDTAKVRLQIQGECLTSSAFRYKGVLGTIITLAKTEGPVK. Lys-56 is a binding site for fatty acid 16:0. The chain crosses the membrane as a helical span at residues 74–96; sequence LYSGLPAGLQRQISFASLRIGLY. The Mitochondrial intermembrane portion of the chain corresponds to 97 to 114; it reads DTVQEFFTTGKEASLGSK. The helical transmembrane segment at 115–131 threads the bilayer; sequence ISAGLTTGGVAVFIGQP. The Mitochondrial matrix portion of the chain corresponds to 132-176; it reads TEVVKVRLQAQSHLHGPKPRYTGTYNAYRIIATTEGLTGLWKGTT. Residues 177–193 form a helical membrane-spanning segment; that stretch reads PNLTRNVIINCTELVTY. Over 194-210 the chain is Mitochondrial intermembrane; that stretch reads DLMKEALVKNKLLADDV. Residues 211–230 traverse the membrane as a helical segment; sequence PCHFVSAVVAGFCTTVLSSP. Over 231-264 the chain is Mitochondrial matrix; that stretch reads VDVVKTRFVNSSPGQYTSVPNCAMMMLTREGPSA. Cys-252 bears the Cysteine sulfenic acid (-SOH) mark. Residues 265 to 287 form a helical membrane-spanning segment; it reads FFKGFVPSFLRLGSWNIIMFVCF. Position 267 (Lys-267) interacts with fatty acid 16:0. Residues 288-305 are Mitochondrial intermembrane-facing; the sequence is EQLKRELMKSRQAMDCAT.

It belongs to the mitochondrial carrier (TC 2.A.29) family. As to quaternary structure, most probably functions as a monomer. Binds one purine nucleotide per monomer. However, has also been suggested to function as a homodimer or a homotetramer. Tightly associates with cardiolipin in the mitochondrion inner membrane; may stabilize and regulate its activity. May undergo sulfenylation upon cold exposure. May increase the sensitivity of UCP1 thermogenic function to the activation by noradrenaline probably through structural effects. In terms of processing, may undergo ubiquitin-mediated proteasomal degradation.

The protein resides in the mitochondrion inner membrane. The enzyme catalyses H(+)(in) = H(+)(out). Its activity is regulated as follows. Has no constitutive proton transporter activity and has to be activated by long-chain fatty acids/LCFAs. Inhibited by purine nucleotides. Both purine nucleotides and LCFAs bind the cytosolic side of the transporter and directly compete to activate or inhibit it. Activated by noradrenaline and reactive oxygen species. Despite lacking canonical translational encoding for selenocysteine, a small pool of the protein has been observed to selectively incorporate selenocysteine at 'Cys-252'. Selenocysteine-modified protein is highly sensitive to redox modification and may constitute a pool of protein highly sensitive to activation by elevated levels of reactive oxygen species (ROS). Its function is as follows. Mitochondrial protein responsible for thermogenic respiration, a specialized capacity of brown adipose tissue and beige fat that participates in non-shivering adaptive thermogenesis to temperature and diet variations and more generally to the regulation of energy balance. Functions as a long-chain fatty acid/LCFA and proton symporter, simultaneously transporting one LCFA and one proton through the inner mitochondrial membrane. However, LCFAs remaining associated with the transporter via their hydrophobic tails, it results in an apparent transport of protons activated by LCFAs. Thereby, dissipates the mitochondrial proton gradient and converts the energy of substrate oxydation into heat instead of ATP. Regulates the production of reactive oxygen species/ROS by mitochondria. The polypeptide is Mitochondrial brown fat uncoupling protein 1 (Ovis aries (Sheep)).